Reading from the N-terminus, the 351-residue chain is Biotin synthase (351 aa).

Residues 44–262 (NRVQVSTLLS…LAVARILMPQ (219 aa)) enclose the Radical SAM core domain. 3 residues coordinate [4Fe-4S] cluster: Cys-59, Cys-63, and Cys-66. [2Fe-2S] cluster-binding residues include Cys-103, Cys-134, Cys-194, and Arg-266.

Belongs to the radical SAM superfamily. Biotin synthase family. In terms of assembly, homodimer. Requires [4Fe-4S] cluster as cofactor. [2Fe-2S] cluster serves as cofactor.

It catalyses the reaction (4R,5S)-dethiobiotin + (sulfur carrier)-SH + 2 reduced [2Fe-2S]-[ferredoxin] + 2 S-adenosyl-L-methionine = (sulfur carrier)-H + biotin + 2 5'-deoxyadenosine + 2 L-methionine + 2 oxidized [2Fe-2S]-[ferredoxin]. Its pathway is cofactor biosynthesis; biotin biosynthesis; biotin from 7,8-diaminononanoate: step 2/2. Catalyzes the conversion of dethiobiotin (DTB) to biotin by the insertion of a sulfur atom into dethiobiotin via a radical-based mechanism. This Pseudomonas fluorescens (strain Pf0-1) protein is Biotin synthase.